Consider the following 197-residue polypeptide: Beta-crystallin A2 (197 aa).

Positions 1-11 (MSSAPAPGPAP) are N-terminal arm. 2 Beta/gamma crystallin 'Greek key' domains span residues 12–52 (ASLT…KVEN) and 53–99 (GVWV…RPVL). Residues 100-105 (CANHND) form a connecting peptide region. Beta/gamma crystallin 'Greek key' domains follow at residues 106–147 (SRVT…KVSS) and 148–196 (GAWV…RRVQ).

This sequence belongs to the beta/gamma-crystallin family. In terms of assembly, homo/heterodimer, or complexes of higher-order. The structure of beta-crystallin oligomers seems to be stabilized through interactions between the N-terminal arms.

Functionally, crystallins are the dominant structural components of the vertebrate eye lens. The polypeptide is Beta-crystallin A2 (CRYBA2) (Homo sapiens (Human)).